Reading from the N-terminus, the 293-residue chain is 3-hydroxybutyrate-oligomer hydrolase (293 aa).

This sequence belongs to the AB hydrolase superfamily.

It localises to the cytoplasm. The enzyme catalyses (3R)-hydroxybutanoate pentamer + H2O = (3R)-hydroxybutanoate tetramer + (R)-3-hydroxybutanoate + H(+). It catalyses the reaction (3R)-hydroxybutanoate tetramer + H2O = (3R)-hydroxybutanoate trimer + (R)-3-hydroxybutanoate + H(+). It carries out the reaction (3R)-hydroxybutanoate trimer + H2O = (3R)-hydroxybutanoate dimer + (R)-3-hydroxybutanoate + H(+). The catalysed reaction is (3R)-hydroxybutanoate dimer + H2O = 2 (R)-3-hydroxybutanoate + H(+). The enzyme catalyses [(3R)-hydroxybutanoate](n) + H2O = [(3R)-hydroxybutanoate](n-1) + (R)-3-hydroxybutanoate + H(+). Its function is as follows. Catalyzes the degradation of various 3-hydroxybutyrate (3HB) oligomers at a high specific activity and artificial amorphous poly(3-hydroxybutyrate) (PHB) at a lower specific activity. Hydrolyzes the 3HB pentamer most efficiently than the tetramer, trimer and dimer. Does not hydrolyze native PHB granules and semicrystalline PHB. Participates in the mobilization of PHB along with other hydrolases. This chain is 3-hydroxybutyrate-oligomer hydrolase, found in Cupriavidus necator (strain ATCC 17699 / DSM 428 / KCTC 22496 / NCIMB 10442 / H16 / Stanier 337) (Ralstonia eutropha).